Consider the following 64-residue polypeptide: U2-aranetoxin-Av1a (64 aa).

Expressed in fat body, but not in cephalothorax, silk gland, midgut.

Functionally, insecticidal toxin. This chain is U2-aranetoxin-Av1a, found in Araneus ventricosus (Orbweaver spider).